The chain runs to 744 residues: Leucine-rich repeat extensin-like protein 1 (744 aa).

A signal peptide spans 1-26; that stretch reads MLFPPLRSLFLFTLLLSSVCFLQIKA. Asparagine 71 and asparagine 77 each carry an N-linked (GlcNAc...) asparagine glycan. 9 LRR repeats span residues 122–145, 147–170, 171–194, 196–217, 219–240, 241–265, 266–289, 290–313, and 315–336; these read LSDL…TFNR, KLLY…VLSL, PSLK…LFDR, LDAI…MGNS, VSAL…IGQM, GKTL…IGNL, KKVT…VGNM, KSLE…ICQL, and NLEN…CAAS. Asparagine 253 is a glycosylation site (N-linked (GlcNAc...) asparagine). Residues asparagine 318 and asparagine 344 are each glycosylated (N-linked (GlcNAc...) asparagine). One copy of the LRR 10 repeat lies at 381–404; it reads FSPPPPTFKMSPEVRTLPPPIYVY. The segment at 382–744 is contains the Ser-Pro(4) repeats; the sequence is SPPPPTFKMS…ASPPPPPSYY (363 aa). Disordered stretches follow at residues 408 to 445, 518 to 537, 555 to 576, and 658 to 744; these read PPPP…PPPP, VYSS…PESS, PSPV…VYYP, and PPPS…PSYY. Over residues 430-439 the composition is skewed to low complexity; it reads SKMSPSVRAY. Over residues 704–729 the composition is skewed to pro residues; that stretch reads YEPPPEYSYSSSPPPPSPTSYFPPMP.

Hydroxylated on proline residues in the S-P-P-P-P repeat. Post-translationally, O-glycosylated on hydroxyprolines. As to expression, expressed in root hair cells (at protein level).

The protein resides in the secreted. The protein localises to the cell wall. Modulates cell morphogenesis by regulating cell wall formation and assembly, and/or growth polarization. Together with LRX2, component of the extracellular mechanism regulating root hair morphogenesis and elongation. This is Leucine-rich repeat extensin-like protein 1 (LRX1) from Arabidopsis thaliana (Mouse-ear cress).